The primary structure comprises 212 residues: Transcriptional regulator GfcR (212 aa).

A disordered region spans residues 38–60 (LVERSGTGTEPDTSDDGGPHDIH).

Belongs to the purine/pyrimidine phosphoribosyltransferase family. GfcR subfamily.

DNA-binding transcriptional regulator that functions as a regulator of central sugar catabolic pathways. In Haloarcula marismortui (strain ATCC 43049 / DSM 3752 / JCM 8966 / VKM B-1809) (Halobacterium marismortui), this protein is Transcriptional regulator GfcR.